We begin with the raw amino-acid sequence, 393 residues long: 4-hydroxyphenylpyruvate dioxygenase (393 aa).

Threonine 2 carries the N-acetylthreonine modification. 2 VOC domains span residues 18 to 149 (HFHS…LVEK) and 180 to 338 (MIDH…IFTK). An N6-succinyllysine modification is found at lysine 132. Histidine 183 provides a ligand contact to Fe cation. Serine 211, serine 226, and serine 250 each carry phosphoserine. Fe cation is bound by residues histidine 266 and glutamate 349.

It belongs to the 4HPPD family. As to quaternary structure, homodimer. Fe cation is required as a cofactor.

Its subcellular location is the cytoplasm. The protein resides in the endoplasmic reticulum membrane. It localises to the golgi apparatus membrane. The enzyme catalyses 3-(4-hydroxyphenyl)pyruvate + O2 = homogentisate + CO2. It functions in the pathway amino-acid degradation; L-phenylalanine degradation; acetoacetate and fumarate from L-phenylalanine: step 3/6. In terms of biological role, catalyzes the conversion of 4-hydroxyphenylpyruvic acid to homogentisic acid, one of the steps in tyrosine catabolism. In Homo sapiens (Human), this protein is 4-hydroxyphenylpyruvate dioxygenase (HPD).